A 439-amino-acid chain; its full sequence is Dihydroorotate dehydrogenase (quinone), mitochondrial (439 aa).

A mitochondrion-targeting transit peptide spans 1–22 (MMHRVGFNVIGRRSFFTVNARR). The chain crosses the membrane as a helical span at residues 37–53 (LTALLLAGSAGYLYFMN). FMN is bound by residues 119-123 (AGLDK) and Ser143. Lys123 provides a ligand contact to substrate. 168–172 (NRYGF) provides a ligand contact to substrate. Residues Asn215 and Asn245 each coordinate FMN. 245–250 (NVSSPN) lines the substrate pocket. The Nucleophile role is filled by Ser248. Lys296 and Ser324 together coordinate FMN. 325 to 326 (NT) provides a ligand contact to substrate. FMN contacts are provided by residues Gly350, Gly380, and 401 to 402 (YT).

It belongs to the dihydroorotate dehydrogenase family. Type 2 subfamily. FMN serves as cofactor.

It localises to the mitochondrion inner membrane. It carries out the reaction (S)-dihydroorotate + a quinone = orotate + a quinol. It functions in the pathway pyrimidine metabolism; UMP biosynthesis via de novo pathway; orotate from (S)-dihydroorotate (quinone route): step 1/1. Its function is as follows. Catalyzes the conversion of dihydroorotate to orotate with quinone as electron acceptor. The polypeptide is Dihydroorotate dehydrogenase (quinone), mitochondrial (URA9) (Candida glabrata (strain ATCC 2001 / BCRC 20586 / JCM 3761 / NBRC 0622 / NRRL Y-65 / CBS 138) (Yeast)).